Here is a 450-residue protein sequence, read N- to C-terminus: Interferon regulatory factor 4 (450 aa).

The IRF tryptophan pentad repeat DNA-binding region spans 21–129; sequence NGKLRQWLID…DPYKVYRIVP (109 aa). Ser-446 and Ser-447 each carry phosphoserine; by ROCK2.

The protein belongs to the IRF family. Interacts with SPIB and DEF6. Interacts with the BATF-JUNB heterodimer. Interacts with BATF (via bZIP domain); the interaction is direct. Directly interacts with NLRP3 in the nucleus of Th2 cells; this interaction enhances IRF4 ability to bind to the IL4 promoter and is required for optimal IRF4-dependent IL4 transcription. Interacts with SPI1. Post-translationally, phosphorylation by ROCK2 regulates IL-17 and IL-21 production. Lymphoid cells.

It localises to the nucleus. The protein localises to the cytoplasm. In terms of biological role, transcriptional activator. Binds to the interferon-stimulated response element (ISRE) of the MHC class I promoter. Binds the immunoglobulin lambda light chain enhancer, together with PU.1. Probably plays a role in ISRE-targeted signal transduction mechanisms specific to lymphoid cells. Involved in CD8(+) dendritic cell differentiation by forming a complex with the BATF-JUNB heterodimer in immune cells, leading to recognition of AICE sequence (5'-TGAnTCA/GAAA-3'), an immune-specific regulatory element, followed by cooperative binding of BATF and IRF4 and activation of genes. The polypeptide is Interferon regulatory factor 4 (Mus musculus (Mouse)).